We begin with the raw amino-acid sequence, 317 residues long: MPMQGAQRRLLGSLNSTPTATPNLGLAANHTGAPCLEVSIPHGLFLSLGLVSLVENVLVVAAIAKNRNLHSPMYCFICCLALSDLLVSGSNMLETAVILLLEAGALATRASVVQQLQNTIDVLTCSSMLCSLCFLGAIAVDRYVSIFYALRYHSIVTLPRARRAIAAIWVASVLSSTLFIAYCDHAAVLLCLVVFFLAMLVLMAVLYVHMLARACQHAQGITRLHKRQLPAHQGFGLRGAATLTILLGIFFLCWGPFFLHLMLVVLCPQHLTCSCIFKNFKVFLTLIICNTIIDPLIYAFRSQELCRTLKEVLLCSW.

Residues methionine 1–glutamate 37 lie on the Extracellular side of the membrane. Asparagine 29 carries N-linked (GlcNAc...) asparagine glycosylation. The chain crosses the membrane as a helical span at residues valine 38–isoleucine 63. Over alanine 64–proline 72 the chain is Cytoplasmic. Residues methionine 73–leucine 93 form a helical membrane-spanning segment. The Extracellular segment spans residues glutamate 94–asparagine 118. Residues threonine 119–valine 140 traverse the membrane as a helical segment. At aspartate 141–arginine 163 the chain is on the cytoplasmic side. The helical transmembrane segment at alanine 164–cysteine 183 threads the bilayer. The Extracellular segment spans residues aspartate 184–cysteine 191. The chain crosses the membrane as a helical span at residues leucine 192–leucine 211. The Cytoplasmic portion of the chain corresponds to alanine 212–alanine 240. A helical transmembrane segment spans residues alanine 241–leucine 266. Residues cysteine 267–asparagine 279 are Extracellular-facing. The chain crosses the membrane as a helical span at residues phenylalanine 280–phenylalanine 300. Over arginine 301–tryptophan 317 the chain is Cytoplasmic. Residue cysteine 315 is the site of S-palmitoyl cysteine attachment.

The protein belongs to the G-protein coupled receptor 1 family. In terms of assembly, interacts with MGRN1, but does not undergo MGRN1-mediated ubiquitination; this interaction competes with GNAS-binding and thus inhibits agonist-induced cAMP production. Interacts with OPN3; the interaction results in a decrease in MC1R-mediated cAMP signaling and ultimately a decrease in melanin production in melanocytes.

The protein localises to the cell membrane. Its function is as follows. Receptor for MSH (alpha, beta and gamma) and ACTH. The activity of this receptor is mediated by G proteins which activate adenylate cyclase. Mediates melanogenesis, the production of eumelanin (black/brown) and phaeomelanin (red/yellow), via regulation of cAMP signaling in melanocytes. This is Melanocyte-stimulating hormone receptor (MC1R) from Alouatta caraya (Black howler monkey).